A 235-amino-acid chain; its full sequence is 7-cyano-7-deazaguanine synthase (235 aa).

Residue 12–22 coordinates ATP; it reads FSGGQDSTACL. Residues Cys-200, Cys-215, Cys-218, and Cys-221 each contribute to the Zn(2+) site.

Belongs to the QueC family. It depends on Zn(2+) as a cofactor.

It catalyses the reaction 7-carboxy-7-deazaguanine + NH4(+) + ATP = 7-cyano-7-deazaguanine + ADP + phosphate + H2O + H(+). It functions in the pathway purine metabolism; 7-cyano-7-deazaguanine biosynthesis. Catalyzes the ATP-dependent conversion of 7-carboxy-7-deazaguanine (CDG) to 7-cyano-7-deazaguanine (preQ(0)). The protein is 7-cyano-7-deazaguanine synthase of Methylibium petroleiphilum (strain ATCC BAA-1232 / LMG 22953 / PM1).